Here is a 335-residue protein sequence, read N- to C-terminus: Serpentine receptor class alpha-13 (335 aa).

Residues 1–25 lie on the Extracellular side of the membrane; the sequence is MAIISSVNRTCASESLLELYRSYKY. A helical transmembrane segment spans residues 26 to 46; sequence ILSTSFNIIIPIISLFFLVYA. Topologically, residues 47–61 are cytoplasmic; the sequence is IKQLCAQSIIQYSTR. Residues 62–82 form a helical membrane-spanning segment; the sequence is VLLITTILFAVCHQIAYFCFK. Over 83 to 108 the chain is Extracellular; it reads ADLLYTMLFKLDQPCNLQHSSYDCRF. Residues 109-129 form a helical membrane-spanning segment; it reads ITIATTTSNCGMALVQLAMSI. The Cytoplasmic portion of the chain corresponds to 130 to 146; that stretch reads DRVFALKFNRVYYKLKS. Residues 147 to 167 traverse the membrane as a helical segment; the sequence is IPGITLALITLSISFSMFFIL. The Extracellular portion of the chain corresponds to 168 to 192; sequence TIDDPLSGYVNHCGFYPTYSQDKFH. A helical membrane pass occupies residues 193-213; it reads IFLDVTLYLAVFNFVFDIGLM. Topologically, residues 214 to 243 are cytoplasmic; the sequence is YYSYQEILWKRSYSFVNRFQSRISLKCTQA. The helical transmembrane segment at 244-264 threads the bilayer; the sequence is IFIISICQCISNVLYSGLLSL. The Extracellular portion of the chain corresponds to 265–278; sequence LMKLGRYMSSADYN. A helical transmembrane segment spans residues 279-299; that stretch reads LSLSLAYTTPYSCLILPILIC. Residues 300–335 lie on the Cytoplasmic side of the membrane; sequence KVLEYIKKQRTVGILSLRNQKQSMEGHMAMINSAWK.

The protein belongs to the nematode receptor-like protein sra family. Expressed in the AWA and AWC chemosensory neurons.

It localises to the membrane. Chemosensory receptor that negatively regulates RAS/MAPK signaling during vulva induction and the negative regulation of olfaction of volitile attractants. Required for the suppression of vulval induction in response to food starvation. Signaling acts through the GPA-5 G-alpha protein subunit. This is Serpentine receptor class alpha-13 (sra-13) from Caenorhabditis elegans.